A 476-amino-acid chain; its full sequence is Ubiquinone biosynthesis monooxygenase COQ6, mitochondrial (476 aa).

Residues M1 to S42 constitute a mitochondrion transit peptide.

Belongs to the UbiH/COQ6 family. As to quaternary structure, component of a multi-subunit COQ enzyme complex, composed of at least COQ3, COQ4, COQ5, COQ6, COQ7 and COQ9. Interacts with COQ8B and COQ7. FAD is required as a cofactor. In terms of tissue distribution, in the kidney, expressed almost exclusively in glomerular podocytes. In the inner ear, expressed in the spiral ganglion, as well as in stria vascularis and spiral ligament cells.

Its subcellular location is the mitochondrion inner membrane. It is found in the golgi apparatus. The protein localises to the cell projection. The enzyme catalyses 4-hydroxy-3-(all-trans-decaprenyl)benzoate + 2 reduced [2Fe-2S]-[ferredoxin] + O2 + 2 H(+) = 3,4-dihydroxy-5-(all-trans-decaprenyl)benzoate + 2 oxidized [2Fe-2S]-[ferredoxin] + H2O. It carries out the reaction 2-methoxy-6-(all-trans-decaprenyl)phenol + 2 reduced [2Fe-2S]-[ferredoxin] + O2 + 2 H(+) = 2-methoxy-6-(all-trans-decaprenyl)benzene-1,4-diol + 2 oxidized [2Fe-2S]-[ferredoxin] + H2O. It functions in the pathway cofactor biosynthesis; ubiquinone biosynthesis. In terms of biological role, FAD-dependent monooxygenase required for two non-consecutive steps during ubiquinone biosynthesis. Required for the C5-ring hydroxylation during ubiquinone biosynthesis by catalyzing the hydroxylation of 4-hydroxy-3-(all-trans-decaprenyl)benzoic acid to 3,4-dihydroxy-5-(all-trans-decaprenyl)benzoic acid. Also acts downstream of COQ4, for the C1-hydroxylation during ubiquinone biosynthesis by catalyzing the hydroxylation of 2-methoxy-6-(all-trans-decaprenyl)phenol to 2-methoxy-6-(all-trans-decaprenyl)benzene-1,4-diol. The electrons required for the hydroxylation reaction are funneled indirectly to COQ6 from NADPH via a ferredoxin/ferredoxin reductase system composed of FDX2 and FDXR. This chain is Ubiquinone biosynthesis monooxygenase COQ6, mitochondrial, found in Rattus norvegicus (Rat).